Reading from the N-terminus, the 433-residue chain is MGSPEDAGKAPAYRVDHLLSAVESELQAGSEKGDPTERELRVALEDGELWLRFKELTNEMIVTKNGRRMFPVLKVSVSGLDPNAMYSFLLDFVAADGHRWKYVNGEWVPGGKPEPQAPSCVYIHPDSPNFGAHWMKAPVSFSKVKLTNKLNGGGQIMLNSLHKYEPRIHIVRVGGPQRMITSHSFPETQFTAVTAYQNEEITALKIKYNPFAKAFLDAKERNDHKDMMEEAGDNQQSGYSQLGSWLIPGAGALCPPANPHSQFGAPLSLSPAHSCERYSPLRNHRSAPYPNPYTHRNNSPTAYTDNSSACLPMLQSHDNWSSLGVPTHTTMLPMSHSTGTATSSSQYPNLWSVSNSTITPAPQSSGMSNGLSSQFLRGSPVHYTALPHPVTATTSTSPLYDGGAPADLPDSQYDASAHTRLASMWTPITPPSM.

Positions 49–217 form a DNA-binding region, T-box; sequence LWLRFKELTN…YNPFAKAFLD (169 aa).

Monomer. Binds DNA as a monomer.

It localises to the nucleus. Its function is as follows. Involved in the transcriptional regulation of genes required for mesoderm formation and differentiation. Binds to a palindromic site (called T site) and activates gene transcription when bound to such a site. This chain is T-box transcription factor T, found in Gallus gallus (Chicken).